Here is a 105-residue protein sequence, read N- to C-terminus: uncharacterized protein (105 aa).

This is an uncharacterized protein from Haemophilus influenzae (strain ATCC 51907 / DSM 11121 / KW20 / Rd).